We begin with the raw amino-acid sequence, 121 residues long: MSNEKIIEMIKEMSVLELNDLVKAIEEEFGVTAAAPVAVAGAAGGEGAAAEKTEFDVELVSAGSSKIKVVKAVKEATGLGLKDAKDLVDNAPKVVKEAVSKDEAEELKAKLEEAGATVEVK.

Belongs to the bacterial ribosomal protein bL12 family. In terms of assembly, homodimer. Part of the ribosomal stalk of the 50S ribosomal subunit. Forms a multimeric L10(L12)X complex, where L10 forms an elongated spine to which 2 to 4 L12 dimers bind in a sequential fashion. Binds GTP-bound translation factors.

Its function is as follows. Forms part of the ribosomal stalk which helps the ribosome interact with GTP-bound translation factors. Is thus essential for accurate translation. This is Large ribosomal subunit protein bL12 from Macrococcus caseolyticus (strain JCSC5402) (Macrococcoides caseolyticum).